The chain runs to 316 residues: Probable cell division protein WhiA (316 aa).

A DNA-binding region (H-T-H motif) is located at residues 275-309 (TLKELGEMVASGKISKSGINHRLRKLDEIAEQLRT).

It belongs to the WhiA family.

The protein localises to the cytoplasm. The protein resides in the nucleoid. In terms of biological role, involved in cell division and chromosome segregation. May influence the activity of FtsZ. Binds DNA, but does not seem to function as a transcription factor. The protein is Probable cell division protein WhiA of Bacillus subtilis (strain 168).